The sequence spans 274 residues: Orotidine 5'-phosphate decarboxylase (274 aa).

The active-site Proton donor is Lys96.

This sequence belongs to the OMP decarboxylase family. Type 2 subfamily.

It carries out the reaction orotidine 5'-phosphate + H(+) = UMP + CO2. The protein operates within pyrimidine metabolism; UMP biosynthesis via de novo pathway; UMP from orotate: step 2/2. This Bacteroides fragilis (strain YCH46) protein is Orotidine 5'-phosphate decarboxylase.